Consider the following 911-residue polypeptide: Probable 2-oxoadipate dehydrogenase complex component E1 homolog (911 aa).

It belongs to the alpha-ketoglutarate dehydrogenase family. Thiamine diphosphate is required as a cofactor.

The protein resides in the mitochondrion. The catalysed reaction is N(6)-[(R)-lipoyl]-L-lysyl-[protein] + 2-oxoadipate + H(+) = N(6)-[(R)-S(8)-glutaryldihydrolipoyl]-L-lysyl-[protein] + CO2. Its function is as follows. 2-oxoadipate dehydrogenase (E1a) component of the 2-oxoadipate dehydrogenase complex (OADHC). Participates in the first step, rate limiting for the overall conversion of 2-oxoadipate (alpha-ketoadipate) to glutaryl-CoA and CO(2) catalyzed by the whole OADHC. Catalyzes the irreversible decarboxylation of 2-oxoadipate via the thiamine diphosphate (ThDP) cofactor and subsequent transfer of the decarboxylated acyl intermediate on an oxidized dihydrolipoyl group that is covalently amidated to the E2 enzyme (dihydrolipoyllysine-residue succinyltransferase or DLST). This Caenorhabditis elegans protein is Probable 2-oxoadipate dehydrogenase complex component E1 homolog.